The sequence spans 294 residues: 2,2',3-trihydroxybiphenyl dioxygenase (294 aa).

VOC domains are found at residues 7–120 (GYLI…LYVE) and 144–264 (GLGH…LGFG). Residues His147, His209, and Glu260 each contribute to the Fe cation site.

The protein belongs to the extradiol ring-cleavage dioxygenase family. As to quaternary structure, monomer. The cofactor is Fe(2+).

Its pathway is xenobiotic degradation; dibenzo-p-dioxin degradation; 2-hydroxymuconate and catechol from dibenzo-p-dioxin: step 2/3. It participates in xenobiotic degradation; dibenzofuran degradation; 2-hydroxy-2,4-pentadienoate and salicylate from dibenzofuran: step 2/3. In terms of biological role, responsible for meta-cleavage of the first aromatic ring of 2,2',3-trihydroxybiphenyl and 2,3-dihydroxybiphenyl. 2,2',3-trihydroxydiphenyl ether, catechol, 3-methylcatechol, and 4-methylcatechol are oxidized less efficiently and 3,4-dihydroxybiphenyl is oxidized considerably less efficiently. The polypeptide is 2,2',3-trihydroxybiphenyl dioxygenase (dbfB) (Sphingomonas paucimobilis (Pseudomonas paucimobilis)).